Consider the following 638-residue polypeptide: 1-deoxy-D-xylulose-5-phosphate synthase (638 aa).

Residues histidine 72 and 113–115 (GHA) contribute to the thiamine diphosphate site. Residue aspartate 144 coordinates Mg(2+). Residues 145–146 (GA), asparagine 174, tyrosine 289, and glutamate 372 each bind thiamine diphosphate. Asparagine 174 contributes to the Mg(2+) binding site.

The protein belongs to the transketolase family. DXPS subfamily. As to quaternary structure, homodimer. The cofactor is Mg(2+). Thiamine diphosphate serves as cofactor.

The catalysed reaction is D-glyceraldehyde 3-phosphate + pyruvate + H(+) = 1-deoxy-D-xylulose 5-phosphate + CO2. The protein operates within metabolic intermediate biosynthesis; 1-deoxy-D-xylulose 5-phosphate biosynthesis; 1-deoxy-D-xylulose 5-phosphate from D-glyceraldehyde 3-phosphate and pyruvate: step 1/1. Functionally, catalyzes the acyloin condensation reaction between C atoms 2 and 3 of pyruvate and glyceraldehyde 3-phosphate to yield 1-deoxy-D-xylulose-5-phosphate (DXP). The chain is 1-deoxy-D-xylulose-5-phosphate synthase from Gloeobacter violaceus (strain ATCC 29082 / PCC 7421).